The primary structure comprises 1997 residues: Otoferlin (1997 aa).

A C2 1 domain is found at 1–98; that stretch reads MALLIHLKTV…VEESHVEVTD (98 aa). Topologically, residues 1-1963 are cytoplasmic; that stretch reads MALLIHLKTV…ARYFLWHTYR (1963 aa). The disordered stretch occupies residues 128–171; that stretch reads WDDGDFLGDESLQEEEKDSQETDGLLPGSRPSSRPPGEKSFRRA. Positions 129–145 are enriched in acidic residues; the sequence is DDGDFLGDESLQEEEKD. C2 domains are found at residues 236–357 and 400–531; these read KRSK…HKWA and IEGN…FLPT. A disordered region spans residues 642–694; sequence NEVDGLSRPQRPRPRKEPGDEEEVDLIQNASDDEAGDAGDLASVSSTPPMRPQ. Residues 660–678 show a composition bias toward acidic residues; the sequence is GDEEEVDLIQNASDDEAGD. Residues 792 to 821 are a coiled coil; the sequence is RERLKSCMRELENMGQQARMLRAQVKRHTV. 2 consecutive C2 domains span residues 944–1069 and 1115–1242; these read LHAF…PPRF and DRGP…PSWN. Ca(2+) contacts are provided by Asp976, Asp982, Asp1038, Asp1040, and Asp1046. Disordered regions lie at residues 1299-1324 and 1343-1405; these read AEEEKEKKKKKKGTAEEPEEEEPDES and LRQQ…KPKI. Composition is skewed to acidic residues over residues 1314-1324 and 1352-1361; these read EEPEEEEPDES and DLEEKEEVDN. Basic and acidic residues predominate over residues 1370-1383; sequence KGKEKARAAKEEKK. Residues 1387–1396 are compositionally biased toward low complexity; sequence QSSGSGQGSE. 2 C2 domains span residues 1464–1593 and 1714–1865; these read LPED…ATCG and DMPA…KQCT. Positions 1508, 1514, 1563, 1565, 1571, 1836, 1839, and 1842 each coordinate Ca(2+). Residues 1964–1984 traverse the membrane as a helical segment; it reads WLLLKLLLLLLLLLLLALFLY. Residues 1985 to 1997 lie on the Extracellular side of the membrane; sequence SVPGYLVKKILGA.

Belongs to the ferlin family. Interacts with SNAP2; the interaction is direct. Interacts with STX1; the interaction is direct. Interacts with RAB8B. It depends on Ca(2+) as a cofactor. In terms of tissue distribution, isoform 1 and isoform 3 are found in adult brain. Isoform 2 is expressed in the fetus and in adult brain, heart, placenta, skeletal muscle and kidney.

It localises to the cytoplasmic vesicle. The protein resides in the secretory vesicle. It is found in the synaptic vesicle membrane. Its subcellular location is the basolateral cell membrane. The protein localises to the endoplasmic reticulum membrane. It localises to the golgi apparatus membrane. The protein resides in the presynaptic cell membrane. It is found in the cell membrane. Its function is as follows. Key calcium ion sensor involved in the Ca(2+)-triggered synaptic vesicle-plasma membrane fusion and in the control of neurotransmitter release at these output synapses. Interacts in a calcium-dependent manner to the presynaptic SNARE proteins at ribbon synapses of cochlear inner hair cells (IHCs) to trigger exocytosis of neurotransmitter. Also essential to synaptic exocytosis in immature outer hair cells (OHCs). May also play a role within the recycling of endosomes. In Homo sapiens (Human), this protein is Otoferlin (OTOF).